The following is a 516-amino-acid chain: GPI mannosyltransferase 4 (516 aa).

The Lumenal segment spans residues 1–5 (MMRYQ). The helical transmembrane segment at 6-26 (WWLYLVYAIGLMLCLGPSYIH) threads the bilayer. Residues 27–60 (PDEHFQCIEILAMQFMKVKGTIPWEFKSKFAARS) lie on the Cytoplasmic side of the membrane. A helical membrane pass occupies residues 61 to 81 (YGPLLLVYGPLFTILESFPEI). The Lumenal segment spans residues 82-175 (QDNPALILYS…IQRSNFKNSV (94 aa)). The helical transmembrane segment at 176–196 (ILGLIFSFGVFNRVTFPAFIF) threads the bilayer. Residues 197 to 210 (LPCLILFWKFYRVH) are Cytoplasmic-facing. A helical membrane pass occupies residues 211–231 (WKSFSLLLLSFSFSSCLFVLI). Residues 232-270 (DTNIYNNGKGFVITPLNNLKYNLNVQNLQVHGLHPRYTH) are Lumenal-facing. The helical transmembrane segment at 271 to 291 (LLVNLPQIVGPVLLLAIFSGY) threads the bilayer. Topologically, residues 292 to 295 (KLDK) are cytoplasmic. Residues 296–316 (LSTYAIISGLLFLSFFQHQEL) form a helical membrane-spanning segment. A topological domain (lumenal) is located at residue Arg317. A helical transmembrane segment spans residues 318–338 (FLVPLVPLLVTNLNWTPLSST). Residues 339–348 (LVNKKIFKGT) are Cytoplasmic-facing. A helical transmembrane segment spans residues 349 to 369 (WLLFNIIMAFIMGISHQAGII). Topologically, residues 370-516 (QFLGDYFHFR…GLTVYSIELL (147 aa)) are lumenal. Residues Asn403 and Asn452 are each glycosylated (N-linked (GlcNAc...) asparagine).

This sequence belongs to the glycosyltransferase 22 family. PIGZ subfamily.

It localises to the endoplasmic reticulum membrane. It functions in the pathway glycolipid biosynthesis; glycosylphosphatidylinositol-anchor biosynthesis. Functionally, alpha-1,2-mannosyltransferase involved in glycosylphosphatidylinositol-anchor biosynthesis. Transfers a fourth mannose to trimannosyl-GPIs during GPI precursor assembly. The presence of a fourth mannose in GPI is essential in fungi. Involved in plasmid maintenance with SMP2. The sequence is that of GPI mannosyltransferase 4 (SMP3) from Saccharomyces cerevisiae (strain ATCC 204508 / S288c) (Baker's yeast).